The following is a 573-amino-acid chain: DNA polymerase lambda (573 aa).

In terms of domain architecture, BRCT spans 35-131; the sequence is EARGWLSSLR…RLTDTEGFSL (97 aa). Disordered stretches follow at residues 126-204 and 214-233; these read TEGF…GPQV and TGHYPTPPEEDGGPDPAPEA. The tract at residues 263–277 is DNA-binding; sequence KAYSVQGDKWRALGY. The Schiff-base intermediate with DNA role is filled by Lys310. The DNA-binding stretch occupies residues 343-346; sequence GTKT. DCTP contacts are provided by residues Arg384, 415–418, and 424–427; these read SYRR and GDVD. Residues 418 to 427 are involved in primer binding; that stretch reads RGKMTCGDVD. Mn(2+) contacts are provided by Asp425, Asp427, and Asp488. The segment at 464–503 is DNA-binding; the sequence is ENGQQQKYLGVCRLPGPGKRHRRLDIIVVPYCEFACALLY. Asn511 contributes to the dCTP binding site.

This sequence belongs to the DNA polymerase type-X family. As to quaternary structure, interacts with PCNA. Interacts with PAXX; promoting POLL recruitment to double-strand breaks (DSBs) and stimulation of the end-filling activity of POLL. Interacts with XRCC4; promoting POLL recruitment to double-strand breaks (DSBs) and stimulation of the end-filling activity of POLL. Interacts with NHEJ1/XLF; promoting POLL recruitment to double-strand breaks (DSBs) and stimulation of the end-filling activity of POLL. Requires Mn(2+) as cofactor.

The protein localises to the nucleus. The catalysed reaction is DNA(n) + a 2'-deoxyribonucleoside 5'-triphosphate = DNA(n+1) + diphosphate. In terms of biological role, DNA polymerase that functions in several pathways of DNA repair. Involved in base excision repair (BER) responsible for repair of lesions that give rise to abasic (AP) sites in DNA. Also contributes to DNA double-strand break repair by non-homologous end joining and homologous recombination. Has both template-dependent and template-independent (terminal transferase) DNA polymerase activities. Also has a 5'-deoxyribose-5-phosphate lyase (dRP lyase) activity. The protein is DNA polymerase lambda of Mus musculus (Mouse).